We begin with the raw amino-acid sequence, 193 residues long: Acyl carrier protein phosphodiesterase (193 aa).

The protein belongs to the AcpH family.

The enzyme catalyses holo-[ACP] + H2O = apo-[ACP] + (R)-4'-phosphopantetheine + H(+). Converts holo-ACP to apo-ACP by hydrolytic cleavage of the phosphopantetheine prosthetic group from ACP. This is Acyl carrier protein phosphodiesterase from Enterobacter sp. (strain 638).